The sequence spans 137 residues: Major seminal plasma glycoprotein PSP-II (137 aa).

An N-terminal signal peptide occupies residues Met-1–Thr-21. Disulfide bonds link Cys-30–Cys-51 and Cys-74–Cys-95. Residues Cys-30–Ser-131 form the CUB domain. A glycan (N-linked (GlcNAc...) (complex) asparagine) is linked at Asn-119.

Monomer or heterodimer with PSP-I (depending on the type of glycosylation of PSP-I). Seminal plasma or sperm.

It is found in the secreted. The polypeptide is Major seminal plasma glycoprotein PSP-II (Sus scrofa (Pig)).